A 347-amino-acid chain; its full sequence is NADH-ubiquinone oxidoreductase chain 2 (347 aa).

10 helical membrane passes run 1 to 21 (MNPI…TIVM), 25 to 45 (HWLT…PMLM), 59 to 79 (YFLT…INLM), 96 to 116 (IILT…FWVP), 148 to 168 (IINL…GGWG), 178 to 198 (IMAY…IYNP), 200 to 220 (LTML…MLLI), 237 to 257 (MPLI…LPPL), 274 to 294 (NSII…YFYM), and 326 to 346 (LSPL…MMIL).

It belongs to the complex I subunit 2 family. As to quaternary structure, core subunit of respiratory chain NADH dehydrogenase (Complex I) which is composed of 45 different subunits. Interacts with TMEM242.

The protein localises to the mitochondrion inner membrane. The catalysed reaction is a ubiquinone + NADH + 5 H(+)(in) = a ubiquinol + NAD(+) + 4 H(+)(out). In terms of biological role, core subunit of the mitochondrial membrane respiratory chain NADH dehydrogenase (Complex I) which catalyzes electron transfer from NADH through the respiratory chain, using ubiquinone as an electron acceptor. Essential for the catalytic activity and assembly of complex I. The chain is NADH-ubiquinone oxidoreductase chain 2 from Gardnerycteris crenulata (Striped hairy-nosed bat).